A 110-amino-acid polypeptide reads, in one-letter code: Iron-sulfur cluster assembly protein CyaY (110 aa).

Belongs to the frataxin family.

In terms of biological role, involved in iron-sulfur (Fe-S) cluster assembly. May act as a regulator of Fe-S biogenesis. This is Iron-sulfur cluster assembly protein CyaY from Pseudomonas fluorescens (strain Pf0-1).